Reading from the N-terminus, the 356-residue chain is Ubiquitin-conjugating enzyme E2 variant 3 (356 aa).

The disordered stretch occupies residues 1 to 83 (MSDQPGTSRP…LEDLHNYHRE (83 aa)). Positions 18 to 32 (PTKTATRRRARPIAI) are enriched in polar residues. The segment covering 63-76 (QPRKTVPKNVPLED) has biased composition (basic and acidic residues). The UBC core domain occupies 169-324 (DIITEFMNRS…AREFVMKMAG (156 aa)).

Belongs to the ubiquitin-conjugating enzyme family. As to quaternary structure, may interact with pmk-3. In terms of tissue distribution, expressed ubiquitously.

The protein resides in the nucleus. It localises to the cytoplasm. Its subcellular location is the cell projection. The protein localises to the dendrite. It is found in the axon. The protein resides in the cilium. Its function is as follows. Possible negative regulator of polyubiquitination. May modulate the activity of the p38 MAP kinase pnk-3. May have a role in axon termination and synaptic transmission at motor and mechanosensory neurons. Plays a role in intraflagellar transport in cilia and cilium length regulation. The polypeptide is Ubiquitin-conjugating enzyme E2 variant 3 (Caenorhabditis elegans).